The following is a 452-amino-acid chain: Isocitrate dehydrogenase [NADP], mitochondrial (452 aa).

Residues 1-39 (MAGYLRVVRSLCRASGSGSAWAPAALTAPNLQEQPRRHY) constitute a mitochondrion transit peptide. 4 positions are modified to N6-acetyllysine: Lys-45, Lys-48, Lys-67, and Lys-69. N6-acetyllysine; alternate occurs at positions 80 and 106. N6-succinyllysine; alternate occurs at positions 80 and 106. NADP(+) contacts are provided by residues 115–117 (TIT) and Arg-122. Thr-117 contributes to the D-threo-isocitrate binding site. D-threo-isocitrate-binding positions include 134 to 140 (SPNGTIR) and Arg-149. N6-acetyllysine is present on Lys-155. Lys-166 carries the N6-acetyllysine; alternate modification. Residue Lys-166 is modified to N6-succinyllysine; alternate. D-threo-isocitrate is bound at residue Arg-172. Residues Lys-180 and Lys-193 each carry the N6-acetyllysine; alternate modification. An N6-succinyllysine; alternate mark is found at Lys-180 and Lys-193. Lys-199 is modified (N6-acetyllysine). Position 256 is an N6-acetyllysine; alternate (Lys-256). Lys-256 is modified (N6-succinyllysine; alternate). An N6-acetyllysine mark is found at Lys-263, Lys-272, Lys-275, and Lys-280. Lys-282 carries the N6-acetyllysine; alternate modification. Lys-282 carries the N6-succinyllysine; alternate modification. Asp-291 serves as a coordination point for Mn(2+). Lys-299 contacts NADP(+). Position 314 (Asp-314) interacts with Mn(2+). Residues 349-354 (GTVTRH) and Asn-367 each bind NADP(+). Residue Lys-384 is modified to N6-acetyllysine; alternate. The residue at position 384 (Lys-384) is an N6-succinyllysine; alternate. Lys-400, Lys-413, and Lys-442 each carry N6-acetyllysine.

This sequence belongs to the isocitrate and isopropylmalate dehydrogenases family. In terms of assembly, homodimer. It depends on Mg(2+) as a cofactor. Requires Mn(2+) as cofactor. In terms of processing, acetylation at Lys-413 dramatically reduces catalytic activity. Deacetylated by SIRT3.

Its subcellular location is the mitochondrion. The enzyme catalyses D-threo-isocitrate + NADP(+) = 2-oxoglutarate + CO2 + NADPH. Functionally, plays a role in intermediary metabolism and energy production. It may tightly associate or interact with the pyruvate dehydrogenase complex. This is Isocitrate dehydrogenase [NADP], mitochondrial (IDH2) from Bos taurus (Bovine).